A 158-amino-acid polypeptide reads, in one-letter code: MALFHNPEERPYKLPDLCRTLDTTLHDVTIDCVYCRRQLQRTEVYEFAFSDLCVVYRDGVPFAACQSCIKFYAKIRELRYYSESVYATTLETITNTKLYNLLIRCMSCLKPLCPAEKLRHLTTKRRLHKIAGNFTGQCRHCWTSKREDRRRIRQETQV.

2 zinc fingers span residues 32–68 (CVYC…CQSC) and 105–141 (CMSC…CRHC). A PDZ-binding domain motif is present at residues 156 to 158 (TQV).

Belongs to the papillomaviridae E6 protein family. In terms of assembly, forms homodimers. Interacts with ubiquitin-protein ligase UBE3A/E6-AP and thus forms a complex with human TP53. Interacts with human NFX1 and MAGI3. Interacts with human IRF3; this interaction inhibits the establishment of antiviral state. Interacts with human TYK2; this interaction inhibits JAK-STAT activation by interferon alpha. Interacts with host DLG1; this interaction leads to the proteasomal degradation of DLG1.

It localises to the host cytoplasm. The protein localises to the host nucleus. Functionally, plays a major role in the induction and maintenance of cellular transformation. Acts mainly as an oncoprotein by stimulating the destruction of many host cell key regulatory proteins. E6 associates with host UBE3A/E6-AP ubiquitin-protein ligase, and inactivates tumor suppressors TP53 and TP73 by targeting them to the 26S proteasome for degradation. In turn, DNA damage and chromosomal instabilities increase and lead to cell proliferation and cancer development. The complex E6/E6AP targets several other substrates to degradation via the proteasome including host DLG1 or NFX1, a repressor of human telomerase reverse transcriptase (hTERT). The resulting increased expression of hTERT prevents the shortening of telomere length leading to cell immortalization. Other cellular targets including BAK1, Fas-associated death domain-containing protein (FADD) and procaspase 8, are degraded by E6/E6AP causing inhibition of apoptosis. E6 also inhibits immune response by interacting with host IRF3 and TYK2. These interactions prevent IRF3 transcriptional activities and inhibit TYK2-mediated JAK-STAT activation by interferon alpha resulting in inhibition of the interferon signaling pathway. The sequence is that of Protein E6 from Homo sapiens (Human).